The following is a 185-amino-acid chain: MLQAIYNETKDLMQKSIQALNRDFSTLRSAKVSVNILDHIKVDYYGTPTALNQVGSVMSLDATTLQISPWEKNLLKEIERSIQEANIGVNPNNDGETIKLFFPPMTSEQRKLIAKDAKAMGEKAKVAVRNIRQDANNQVKKLEKDKEISEDESKKAQEQIQKITDEAIKKIDESVKNKEDAILKV.

The interval 137–158 (NQVKKLEKDKEISEDESKKAQE) is disordered. Positions 140–158 (KKLEKDKEISEDESKKAQE) are enriched in basic and acidic residues.

It belongs to the RRF family.

The protein localises to the cytoplasm. Its function is as follows. Responsible for the release of ribosomes from messenger RNA at the termination of protein biosynthesis. May increase the efficiency of translation by recycling ribosomes from one round of translation to another. This Helicobacter pylori (strain P12) protein is Ribosome-recycling factor.